The chain runs to 265 residues: Type II pantothenate kinase (265 aa).

6–13 (DAGGTLIK) is an ATP binding site. Glutamate 70 serves as the catalytic Proton acceptor. ATP-binding positions include threonine 99, 121–125 (GGMIQ), tyrosine 137, and serine 225.

Belongs to the type II pantothenate kinase family. Homodimer.

It localises to the cytoplasm. It catalyses the reaction (R)-pantothenate + ATP = (R)-4'-phosphopantothenate + ADP + H(+). It functions in the pathway cofactor biosynthesis; coenzyme A biosynthesis; CoA from (R)-pantothenate: step 1/5. Functionally, catalyzes the phosphorylation of pantothenate (Pan), the first step in CoA biosynthesis. The protein is Type II pantothenate kinase of Staphylococcus epidermidis (strain ATCC 12228 / FDA PCI 1200).